The following is a 2797-amino-acid chain: Nonribosomal peptide synthetase penN (2797 aa).

An adenylation 1 region spans residues 239–625; that stretch reads SRPDHPAICA…ARKDSQVKIR (387 aa). The 74-residue stretch at 751 to 824 folds into the Carrier 1 domain; it reads TDTERHVHRF…DIVSLVRTAT (74 aa). Residue Ser785 is modified to O-(pantetheine 4'-phosphoryl)serine. The segment at 830–856 is disordered; sequence PSAGAEISRSDAPTESPATGSFEGSGY. The segment at 870–1299 is condensation 1; sequence QSFSQARMWF…DIEIGSLLLT (430 aa). An adenylation 2 region spans residues 1328–1731; the sequence is FHQQVAAHGD…GRMDQQVKIR (404 aa). The segment at 1857–1953 is methyltransferase; sequence LEIGTGTGMI…VIKQLIQLHD (97 aa). A Carrier 2 domain is found at 2277 to 2351; sequence SFTDDIERAM…RLAGRVRGFR (75 aa). O-(pantetheine 4'-phosphoryl)serine is present on Ser2311. The condensation 2 stretch occupies residues 2516–2658; it reads YDGISLSSIL…VNRTLIRVQL (143 aa).

The protein belongs to the NRP synthetase family.

The catalysed reaction is O-methyl-L-tyrosine + anthranilate + S-adenosyl-L-methionine + 2 ATP = (-)-4'-methoxycyclopeptine + 2 AMP + S-adenosyl-L-homocysteine + 2 diphosphate + 2 H(+). The enzyme catalyses anthranilate + L-phenylalanine + S-adenosyl-L-methionine + 2 ATP = cyclopeptine + 2 AMP + S-adenosyl-L-homocysteine + 2 diphosphate + 2 H(+). The protein operates within secondary metabolite biosynthesis. It participates in alkaloid biosynthesis. It functions in the pathway mycotoxin biosynthesis. Nonribosomal peptide synthetase; part of the gene cluster that mediates the biosynthesis of penigequinolones, potent insecticidal alkaloids that contain a highly modified 10-carbon prenyl group. The first stage is catalyzed by the nonribosomal peptide synthetase penN that condenses anthranilic acid and O-methyl-L-tyrosine to produce 4'-methoxycyclopeptin. 4'-methoxycyclopeptin is then converted to 4'-methoxydehydrocyclopeptin by the ketoglutarate-dependent dioxygenase penM through dehydrogenation to form a double bond between C-alpha and C-beta of the O-methyltyrosine side chain. PenM also converts its first product methoxydehydrocyclopeptin to 4'-methoxycyclopenin. The following conversion of 4'methoxycyclopenin into 4'-methoxyviridicatin is catalyzed by the cyclopenase penL. 4'-methoxyviridicatin is the precursor of quinolone natural products, and is further converted to quinolinone B. The prenyltransferase penI then catalyzes the canonical Friedel-Crafts alkylation of quinolinone B with dimethylallyl cation to yield dimethylallyl quinolone, which is subjected to FAD-dependent dehydrogenation by the FAD-linked oxidoreductase penH to yield conjugated aryl diene. The delta(3') double bond then serves as the site of the second alkylation with DMAPP catalyzed by the prenyltransferase penG to yield a carbenium ion intermediate, which can be attacked by H(2)O to yield a styrenyl quinolone containing a C3'-hydroxyprenyl chain, or undergo cyclization to yield yaequinolones J1 and J2. The conversion of the styrenyl quinolone into the tetrahydrofuran-containing yaequinolone C is performed by the FAD-dependent monooxygenase penE and involves epoxidation of the terminal C7'-C8' olefin, followed by epoxide ring opening initiated by the C3' hydroxyl group. The predicted cysteine hydrolase penJ acts as an epoxide hydrolase that enhances the rate of the 5-exo-tet cyclization step, increasing the yield of yaequinolone C. PenF catalyzes the cationic rearrangement of the epoxide formed by penE (before ring opening to produce yaequinolone C) into yaequinolone D. Finally, the short-chain dehydrogenase/reductase (SDR)-like reductase penD, catalyzes both the dehydration of yaequinolone D and the reduction of the resulting oxonium to yield penigequinolone. This chain is Nonribosomal peptide synthetase penN, found in Penicillium thymicola.